Here is a 528-residue protein sequence, read N- to C-terminus: MSTVNVQIGLHELLNGSNAQIQLSVPQLVEKVLMRNEGKLTSTGAVSASTGKYTGRSPKDKFIVKEASVADKIAWGAVNQPISEEHFNKLYTKVLEYLKEKEELFVFKGFAGADRNYRLPIQVINEYAWHNLFVHQLFIRPTEEELTTHESEFTIVSAPNFKADPAVDGTNSEAFIMVSFEKRIVLIGGTEYAGEMKKSIFSIMNFLLPEQDILSMHCSANVGEEGDVALFFGLSGTGKTTLSADPNRKLIGDDEHGWSDNGVFNIEGGCYAKCVNLSHEKEPQIFDAITFGSVLENVIINDQTRIADYNDTTLTENTRAAYPMHAIDNIVLPSVAGHPNTIIFLTADASGVLPPISKLSKEQAMYHFLSGYTSKLAGTERGVTSPQATFSTCFGSPFLPLDASRYAEMLGEKIEKHDAKVFLVNTGWTGGEYGVGKRMNLGYTRAMIQAALNGELAKTETAKHDIFGLEVPLHVPGVPDEVLMPEQTWADKAAYKAKAIELANEFKANFKKFDSVSEDIINLGGPIA.

Substrate contacts are provided by Arg56, Tyr192, and Lys198. ATP contacts are provided by residues Lys198, His217, and 233 to 241 (GLSGTGKTT). Residues Lys198 and His217 each contribute to the Mn(2+) site. Asp254 is a Mn(2+) binding site. The ATP site is built by Glu282, Arg319, and Thr444. Arg319 serves as a coordination point for substrate.

Belongs to the phosphoenolpyruvate carboxykinase (ATP) family. Mn(2+) serves as cofactor.

It is found in the cytoplasm. It catalyses the reaction oxaloacetate + ATP = phosphoenolpyruvate + ADP + CO2. It participates in carbohydrate biosynthesis; gluconeogenesis. Involved in the gluconeogenesis. Catalyzes the conversion of oxaloacetate (OAA) to phosphoenolpyruvate (PEP) through direct phosphoryl transfer between the nucleoside triphosphate and OAA. The polypeptide is Phosphoenolpyruvate carboxykinase (ATP) (Bacillus cereus (strain 03BB102)).